Here is a 203-residue protein sequence, read N- to C-terminus: UDP-N-acetylglucosamine transferase subunit ALG13 (203 aa).

The protein belongs to the glycosyltransferase 28 family. In terms of assembly, heterodimer with ALG14 to form a functional enzyme.

The protein resides in the endoplasmic reticulum. The catalysed reaction is an N-acetyl-alpha-D-glucosaminyl-diphospho-di-trans,poly-cis-dolichol + UDP-N-acetyl-alpha-D-glucosamine = an N,N'-diacetylchitobiosyl-diphospho-di-trans,poly-cis-dolichol + UDP + H(+). Involved in protein N-glycosylation. Essential for the second step of the dolichol-linked oligosaccharide pathway. The polypeptide is UDP-N-acetylglucosamine transferase subunit ALG13 (ALG13) (Eremothecium gossypii (strain ATCC 10895 / CBS 109.51 / FGSC 9923 / NRRL Y-1056) (Yeast)).